Reading from the N-terminus, the 157-residue chain is MANTETAVFGMGCFWSAEELFRHVDGVISTEVGYMGGNVKNPTYGQVCRGKSGHIEVVKVSYDSKIITYDDLLELFWKNHDPTTPNRQGWDVGEQYSSHIFYFTDEQRIVAEKSLEKMQCYMDLKIVTAIKKASDFFPAEEYHQKYFMKKNNCILNF.

Residue Cys13 is part of the active site.

This sequence belongs to the MsrA Met sulfoxide reductase family.

It carries out the reaction L-methionyl-[protein] + [thioredoxin]-disulfide + H2O = L-methionyl-(S)-S-oxide-[protein] + [thioredoxin]-dithiol. The catalysed reaction is [thioredoxin]-disulfide + L-methionine + H2O = L-methionine (S)-S-oxide + [thioredoxin]-dithiol. Has an important function as a repair enzyme for proteins that have been inactivated by oxidation. Catalyzes the reversible oxidation-reduction of methionine sulfoxide in proteins to methionine. This is Peptide methionine sulfoxide reductase MsrA from Methanococcus maripaludis (strain C7 / ATCC BAA-1331).